The chain runs to 164 residues: Cell division protein SepF (164 aa).

A disordered region spans residues 29 to 57 (INKGRGASQQEYDEYYEDSTPTVTQKEDP).

Belongs to the SepF family. Homodimer. Interacts with FtsZ.

The protein resides in the cytoplasm. Functionally, cell division protein that is part of the divisome complex and is recruited early to the Z-ring. Probably stimulates Z-ring formation, perhaps through the cross-linking of FtsZ protofilaments. Its function overlaps with FtsA. This chain is Cell division protein SepF, found in Exiguobacterium sibiricum (strain DSM 17290 / CCUG 55495 / CIP 109462 / JCM 13490 / 255-15).